The primary structure comprises 158 residues: Kalata-B3/B6 (158 aa).

Positions 1-22 (MAKFTKSLVLCLLLAAFVGAFG) are cleaved as a signal peptide. Residues 23 to 66 (AELSEADKANVVNEIAANIQREILKGVKSSETTLTMFLKEMQLK) constitute a propeptide that is removed on maturation. Positions 67-96 (GLPTCGETCFGGTCNTPGCSCSSWPICTRN) form a cross-link, cyclopeptide (Gly-Asn). Cystine bridges form between Cys-71–Cys-85, Cys-75–Cys-87, and Cys-80–Cys-93. A propeptide spanning residues 97–121 (GLPKRAGVKSSETTLTMFLKEMQLK) is cleaved from the precursor. The segment at residues 122–151 (GLPTCGETCFGGTCNTPGCTCDPWPICTRD) is a cross-link (cyclopeptide (Gly-Asp)). Intrachain disulfides connect Cys-126–Cys-140, Cys-130–Cys-142, and Cys-135–Cys-148. The propeptide occupies 152–158 (GLPSAAA).

The protein belongs to the cyclotide family. Moebius subfamily. Kalata-B3 and kalata-B6 are cyclic peptides.

Functionally, probably participates in a plant defense mechanism. Has hemolytic activity. This is Kalata-B3/B6 (OAK2) from Oldenlandia affinis.